Consider the following 1055-residue polypeptide: RapA guanosine triphosphatase-activating protein 1 (1055 aa).

Disordered stretches follow at residues 76–100, 256–292, 418–525, 544–570, 603–629, and 943–969; these read LSPQ…EEER, NHQP…SSLT, QQLL…FLGV, THAT…SPPL, TTQL…PPSE, and NNNS…NLPT. Basic and acidic residues predominate over residues 89-100; it reads QHEKITPEEEER. Composition is skewed to low complexity over residues 262 to 292, 442 to 455, and 469 to 482; these read STPR…SSLT, DFNL…NNNN, and TTTT…NNNN. Over residues 483 to 494 the composition is skewed to polar residues; sequence ISPQHSGTSGSP. Low complexity-rich tracts occupy residues 603 to 622 and 943 to 966; these read TTQL…TSQP and NNNS…SDSN. In terms of domain architecture, Rap-GAP spans 779–1048; sequence LIQFEAKNIH…RTRKEFLHSF (270 aa).

The protein localises to the cytoplasm. The protein resides in the cell cortex. Its function is as follows. Mediates the deactivation of rap1 and plays an important role in spatially and temporally regulating cell adhesion and chemotaxis by controlling attachment disassembly in the leading edge through the regulation of myosin II assembly and disassembly. Overexpression leads to defective chemotaxis. The protein is RapA guanosine triphosphatase-activating protein 1 (rapgap1) of Dictyostelium discoideum (Social amoeba).